Reading from the N-terminus, the 316-residue chain is Spermidine synthase (316 aa).

One can recognise a PABS domain in the interval 25 to 262 (PGWFSEISPM…GVIGFMLCST (238 aa)). Residue glutamine 56 participates in S-adenosyl 3-(methylsulfanyl)propylamine binding. Residue tyrosine 86 participates in putrescine binding. S-adenosyl 3-(methylsulfanyl)propylamine is bound by residues glutamine 87, aspartate 111, glutamate 131, 162 to 163 (DG), and aspartate 181. The active-site Proton acceptor is aspartate 181. Putrescine is bound by residues 181 to 184 (DSSD) and tyrosine 250.

Belongs to the spermidine/spermine synthase family.

It catalyses the reaction S-adenosyl 3-(methylsulfanyl)propylamine + putrescine = S-methyl-5'-thioadenosine + spermidine + H(+). It participates in amine and polyamine biosynthesis; spermidine biosynthesis; spermidine from putrescine: step 1/1. In Coffea arabica (Arabian coffee), this protein is Spermidine synthase.